A 1484-amino-acid polypeptide reads, in one-letter code: DNA-directed RNA polymerase subunit beta' (1484 aa).

Zn(2+) contacts are provided by Cys67, Cys69, Cys82, and Cys85. Mg(2+) is bound by residues Asp499, Asp501, and Asp503. The Zn(2+) site is built by Cys867, Cys943, Cys950, and Cys953.

It belongs to the RNA polymerase beta' chain family. In terms of assembly, the RNAP catalytic core consists of 2 alpha, 1 beta, 1 beta' and 1 omega subunit. When a sigma factor is associated with the core the holoenzyme is formed, which can initiate transcription. Mg(2+) serves as cofactor. Requires Zn(2+) as cofactor.

The catalysed reaction is RNA(n) + a ribonucleoside 5'-triphosphate = RNA(n+1) + diphosphate. In terms of biological role, DNA-dependent RNA polymerase catalyzes the transcription of DNA into RNA using the four ribonucleoside triphosphates as substrates. This chain is DNA-directed RNA polymerase subunit beta', found in Chlorobium phaeovibrioides (strain DSM 265 / 1930) (Prosthecochloris vibrioformis (strain DSM 265)).